The following is a 403-amino-acid chain: Phosphoglycerate kinase (403 aa).

Residues 21-23 (DFN), arginine 36, 59-62 (HVGR), arginine 119, and arginine 154 each bind substrate. Residues lysine 207, glycine 299, glutamate 330, and 357-360 (GGDA) each bind ATP.

The protein belongs to the phosphoglycerate kinase family. In terms of assembly, monomer.

Its subcellular location is the cytoplasm. The enzyme catalyses (2R)-3-phosphoglycerate + ATP = (2R)-3-phospho-glyceroyl phosphate + ADP. The protein operates within carbohydrate degradation; glycolysis; pyruvate from D-glyceraldehyde 3-phosphate: step 2/5. The protein is Phosphoglycerate kinase (pgk) of Chlamydia trachomatis serovar D (strain ATCC VR-885 / DSM 19411 / UW-3/Cx).